An 85-amino-acid polypeptide reads, in one-letter code: Small ribosomal subunit protein eS27 (85 aa).

The C4-type zinc-finger motif lies at 38–60 (CHGCRTITTVFSHAQNVVICSSC).

Belongs to the eukaryotic ribosomal protein eS27 family. Zn(2+) serves as cofactor.

The protein is Small ribosomal subunit protein eS27 (rps27) of Dictyostelium discoideum (Social amoeba).